We begin with the raw amino-acid sequence, 699 residues long: Glycine--tRNA ligase beta subunit (699 aa).

This sequence belongs to the class-II aminoacyl-tRNA synthetase family. As to quaternary structure, tetramer of two alpha and two beta subunits.

It localises to the cytoplasm. The catalysed reaction is tRNA(Gly) + glycine + ATP = glycyl-tRNA(Gly) + AMP + diphosphate. This is Glycine--tRNA ligase beta subunit from Baumannia cicadellinicola subsp. Homalodisca coagulata.